Reading from the N-terminus, the 256-residue chain is Homeobox protein goosecoid (256 aa).

Positions 160 to 219 (KRRHRTIFTDEQLEALENLFQETKYPDVGTREQLARKVHLREEKVEVWFKNRRAKWRRQK) form a DNA-binding region, homeobox. The interval 213-256 (AKWRRQKRSSSEESENAEKWNKTSSKASPEKREEEGKSDLDSDS) is disordered. The span at 240–256 (SPEKREEEGKSDLDSDS) shows a compositional bias: basic and acidic residues.

Belongs to the paired homeobox family. Bicoid subfamily. As to expression, in early gastrulation, expressed in the dorsal lip. In later stages of development found in head, limbs and body wall. In the embryo, expressed in the postotic cranial neural crest cells, the frontonasal prominence, the first branchial arch and cleft, and specific regions of large joints.

It is found in the nucleus. In terms of biological role, regulates chordin (CHRD). May play a role in spatial programing within discrete embryonic fields or lineage compartments during organogenesis. In concert with NKX3-2, plays a role in defining the structural components of the middle ear; required for the development of the entire tympanic ring. Goosecoid-expressing regions of the gastrulating mouse egg cylinder have organizer-like activity when transplanted into Xenopus embryos. Probably involved in the regulatory networks that define neural crest cell fate specification and determine mesoderm cell lineages in mammals. The sequence is that of Homeobox protein goosecoid (Gsc) from Mus musculus (Mouse).